The sequence spans 121 residues: Small ribosomal subunit protein uS13 (121 aa).

Positions 95–121 (LPVRGQNTKNNARTRKGKAVAIAGKKK) are disordered. Positions 106-121 (ARTRKGKAVAIAGKKK) are enriched in basic residues.

It belongs to the universal ribosomal protein uS13 family. Part of the 30S ribosomal subunit. Forms a loose heterodimer with protein S19. Forms two bridges to the 50S subunit in the 70S ribosome.

Its function is as follows. Located at the top of the head of the 30S subunit, it contacts several helices of the 16S rRNA. In the 70S ribosome it contacts the 23S rRNA (bridge B1a) and protein L5 of the 50S subunit (bridge B1b), connecting the 2 subunits; these bridges are implicated in subunit movement. Contacts the tRNAs in the A and P-sites. The sequence is that of Small ribosomal subunit protein uS13 from Streptococcus thermophilus (strain CNRZ 1066).